We begin with the raw amino-acid sequence, 305 residues long: Sulfate adenylyltransferase subunit 2 (305 aa).

It belongs to the PAPS reductase family. CysD subfamily. Heterodimer composed of CysD, the smaller subunit, and CysN.

It carries out the reaction sulfate + ATP + H(+) = adenosine 5'-phosphosulfate + diphosphate. It participates in sulfur metabolism; hydrogen sulfide biosynthesis; sulfite from sulfate: step 1/3. Its function is as follows. With CysN forms the ATP sulfurylase (ATPS) that catalyzes the adenylation of sulfate producing adenosine 5'-phosphosulfate (APS) and diphosphate, the first enzymatic step in sulfur assimilation pathway. APS synthesis involves the formation of a high-energy phosphoric-sulfuric acid anhydride bond driven by GTP hydrolysis by CysN coupled to ATP hydrolysis by CysD. The sequence is that of Sulfate adenylyltransferase subunit 2 from Azotobacter vinelandii (strain DJ / ATCC BAA-1303).